The sequence spans 348 residues: GDSL esterase/lipase At4g30140 (348 aa).

The N-terminal stretch at 1–28 (MVEGESKALWIILATVFAVAAVAPAVHG) is a signal peptide. Ser-40 functions as the Nucleophile in the catalytic mechanism. Residues Asp-316 and His-319 contribute to the active site. A glycan (N-linked (GlcNAc...) asparagine) is linked at Asn-342.

It belongs to the 'GDSL' lipolytic enzyme family.

It localises to the secreted. The polypeptide is GDSL esterase/lipase At4g30140 (Arabidopsis thaliana (Mouse-ear cress)).